The following is a 341-amino-acid chain: tRNA N6-adenosine threonylcarbamoyltransferase (341 aa).

Fe cation is bound by residues H117 and H121. Residues 140-144 (VVSGG), D173, G186, and N278 contribute to the substrate site. D306 is a binding site for Fe cation.

The protein belongs to the KAE1 / TsaD family. Fe(2+) is required as a cofactor.

The protein resides in the cytoplasm. The enzyme catalyses L-threonylcarbamoyladenylate + adenosine(37) in tRNA = N(6)-L-threonylcarbamoyladenosine(37) in tRNA + AMP + H(+). Functionally, required for the formation of a threonylcarbamoyl group on adenosine at position 37 (t(6)A37) in tRNAs that read codons beginning with adenine. Is involved in the transfer of the threonylcarbamoyl moiety of threonylcarbamoyl-AMP (TC-AMP) to the N6 group of A37, together with TsaE and TsaB. TsaD likely plays a direct catalytic role in this reaction. The chain is tRNA N6-adenosine threonylcarbamoyltransferase from Symbiobacterium thermophilum (strain DSM 24528 / JCM 14929 / IAM 14863 / T).